Reading from the N-terminus, the 435-residue chain is Enolase (435 aa).

Gln163 contacts (2R)-2-phosphoglycerate. The Proton donor role is filled by Glu205. Positions 243, 292, and 319 each coordinate Mg(2+). Residues Lys344, Arg373, Ser374, and Lys395 each contribute to the (2R)-2-phosphoglycerate site. The active-site Proton acceptor is the Lys344.

The protein belongs to the enolase family. Requires Mg(2+) as cofactor.

It is found in the cytoplasm. The protein resides in the secreted. It localises to the cell surface. The enzyme catalyses (2R)-2-phosphoglycerate = phosphoenolpyruvate + H2O. It functions in the pathway carbohydrate degradation; glycolysis; pyruvate from D-glyceraldehyde 3-phosphate: step 4/5. Catalyzes the reversible conversion of 2-phosphoglycerate (2-PG) into phosphoenolpyruvate (PEP). It is essential for the degradation of carbohydrates via glycolysis. The sequence is that of Enolase from Streptococcus equi subsp. zooepidemicus (strain MGCS10565).